A 292-amino-acid polypeptide reads, in one-letter code: Porphobilinogen deaminase (292 aa).

Cysteine 235 bears the S-(dipyrrolylmethanemethyl)cysteine mark.

Belongs to the HMBS family. Monomer. Requires dipyrromethane as cofactor.

The enzyme catalyses 4 porphobilinogen + H2O = hydroxymethylbilane + 4 NH4(+). It participates in porphyrin-containing compound metabolism; protoporphyrin-IX biosynthesis; coproporphyrinogen-III from 5-aminolevulinate: step 2/4. Tetrapolymerization of the monopyrrole PBG into the hydroxymethylbilane pre-uroporphyrinogen in several discrete steps. This chain is Porphobilinogen deaminase, found in Acetivibrio thermocellus (strain ATCC 27405 / DSM 1237 / JCM 9322 / NBRC 103400 / NCIMB 10682 / NRRL B-4536 / VPI 7372) (Clostridium thermocellum).